Reading from the N-terminus, the 393-residue chain is MANTVYDVTTWSGATISPYVDIGAVINQIIADIKANQTSQAARPGAVIYIPPGHYDLLTRVVVDVSFLQIKGSGHGFLSEAIRDESSTGSWVETQPGASHIRVKNTDGNREAFLVSRSGDPNVVGRLNSIEFKGFCLDGVTDSKPYSPGNSKIGISVQSDNDSFHVEGMGFVYLEHAIIVKGADAPNITNNFIAECGSCIELTGASQVAKITNNFLISAWAGYSIYAENAEGPLITGNSLLWAANITLSDCNRVSISSNKLLSNFPSMVALLGNCSENLIAANHFRRVSGDGTSTRFDDLFGLVHIEGNNNTVTGNMFSFNVPASSISPSGATPTIILVKSGDSNYLATNNIVSNVSAMVVLDGSTTATRIIYSAKNSQLNAYTTSYTLVPTP.

The enzyme catalyses Produces alpha-D-fructofuranose beta-D-fructofuranose 1,2':2,1'-dianhydride (DFA I) by successively eliminating the diminishing (2-&gt;1)-beta-D-fructan (inulin) chain from the terminal D-fructosyl-D-fructosyl disaccharide.. The chain is Inulin fructotransferase [DFA-I-forming] from Arthrobacter globiformis.